The chain runs to 275 residues: Large ribosomal subunit protein uL2 (275 aa).

Disordered regions lie at residues leucine 34 to lysine 59 and valine 223 to lysine 275.

It belongs to the universal ribosomal protein uL2 family. In terms of assembly, part of the 50S ribosomal subunit. Forms a bridge to the 30S subunit in the 70S ribosome.

In terms of biological role, one of the primary rRNA binding proteins. Required for association of the 30S and 50S subunits to form the 70S ribosome, for tRNA binding and peptide bond formation. It has been suggested to have peptidyltransferase activity; this is somewhat controversial. Makes several contacts with the 16S rRNA in the 70S ribosome. This is Large ribosomal subunit protein uL2 from Teredinibacter turnerae (strain ATCC 39867 / T7901).